The primary structure comprises 245 residues: 1-(5-phosphoribosyl)-5-[(5-phosphoribosylamino)methylideneamino] imidazole-4-carboxamide isomerase (245 aa).

Catalysis depends on Asp-7, which acts as the Proton acceptor. Residue Asp-129 is the Proton donor of the active site.

The protein belongs to the HisA/HisF family.

The protein resides in the cytoplasm. The catalysed reaction is 1-(5-phospho-beta-D-ribosyl)-5-[(5-phospho-beta-D-ribosylamino)methylideneamino]imidazole-4-carboxamide = 5-[(5-phospho-1-deoxy-D-ribulos-1-ylimino)methylamino]-1-(5-phospho-beta-D-ribosyl)imidazole-4-carboxamide. The protein operates within amino-acid biosynthesis; L-histidine biosynthesis; L-histidine from 5-phospho-alpha-D-ribose 1-diphosphate: step 4/9. The sequence is that of 1-(5-phosphoribosyl)-5-[(5-phosphoribosylamino)methylideneamino] imidazole-4-carboxamide isomerase from Shigella boydii serotype 18 (strain CDC 3083-94 / BS512).